The primary structure comprises 409 residues: Lissencephaly-1 homolog (409 aa).

The region spanning 7-39 (RRERSNQAIADYLGSNGYTDALEAFRKEADMPN) is the LisH domain. The stretch at 54–81 (TSVIRLQKKVMELEAKLSEAEKEAIEGA) forms a coiled coil. WD repeat units follow at residues 104 to 145 (GHRA…RTLK), 146 to 185 (GHTD…ECVK), 189 to 228 (GHDH…CVKT), 231 to 270 (GHRE…CKAE), 273 to 332 (EHEN…CLFT), 335 to 374 (GHDN…CMKT), and 377 to 409 (AHSH…WECR).

The protein belongs to the WD repeat LIS1/nudF family.

The protein resides in the cytoplasm. Its subcellular location is the cytoskeleton. It is found in the microtubule organizing center. The protein localises to the centrosome. Positively regulates the activity of the minus-end directed microtubule motor protein dynein. May enhance dynein-mediated microtubule sliding by targeting dynein to the microtubule plus end. Required for several dynein- and microtubule-dependent processes. This is Lissencephaly-1 homolog from Aedes aegypti (Yellowfever mosquito).